A 296-amino-acid chain; its full sequence is Syntenin-2 (296 aa).

2 PDZ domains span residues 112–191 and 196–271; these read EIHL…VRDR and TVTM…IPTV.

In terms of assembly, monomer and homodimer. Interacts with SDCBP. Interacts with TM4SF1.

The protein resides in the cytoplasm. It is found in the nucleus. The protein localises to the nucleolus. It localises to the nucleoplasm. Its subcellular location is the cell membrane. The protein resides in the nucleus speckle. In terms of biological role, binds phosphatidylinositol 4,5-bisphosphate (PIP2). May play a role in the organization of nuclear PIP2, cell division and cell survival. The sequence is that of Syntenin-2 (Sdcbp2) from Rattus norvegicus (Rat).